The primary structure comprises 427 residues: uncharacterized protein (427 aa).

The protein belongs to the CAF1 family.

This is an uncharacterized protein from Schizosaccharomyces pombe (strain 972 / ATCC 24843) (Fission yeast).